The chain runs to 89 residues: Endoribonuclease VapD 1 (89 aa).

The protein belongs to the VapD ribonuclease family. As to quaternary structure, homodimer.

Its function is as follows. Cleaves ssRNA, mostly between U:A. The sequence is that of Endoribonuclease VapD 1 from Riemerella anatipestifer (Moraxella anatipestifer).